A 271-amino-acid polypeptide reads, in one-letter code: Regulatory protein RecX (271 aa).

The protein belongs to the RecX family.

It is found in the cytoplasm. Its function is as follows. Modulates RecA activity. This Lactobacillus delbrueckii subsp. bulgaricus (strain ATCC 11842 / DSM 20081 / BCRC 10696 / JCM 1002 / NBRC 13953 / NCIMB 11778 / NCTC 12712 / WDCM 00102 / Lb 14) protein is Regulatory protein RecX.